Here is a 124-residue protein sequence, read N- to C-terminus: Large ribosomal subunit protein bL12 (124 aa).

It belongs to the bacterial ribosomal protein bL12 family. As to quaternary structure, homodimer. Part of the ribosomal stalk of the 50S ribosomal subunit. Forms a multimeric L10(L12)X complex, where L10 forms an elongated spine to which 2 to 4 L12 dimers bind in a sequential fashion. Binds GTP-bound translation factors.

Functionally, forms part of the ribosomal stalk which helps the ribosome interact with GTP-bound translation factors. Is thus essential for accurate translation. The chain is Large ribosomal subunit protein bL12 from Burkholderia mallei (strain NCTC 10247).